The sequence spans 453 residues: DDB1- and CUL4-associated factor 12 (453 aa).

Residues 1–12 are compositionally biased toward basic residues; the sequence is MARKAVSRKRKA. Positions 1 to 26 are disordered; the sequence is MARKAVSRKRKAPASPGAGSDAQGQQ. The segment at 1–38 is required for nuclear location and interaction with MOV10; sequence MARKAVSRKRKAPASPGAGSDAQGQQFGWDHTLHKRKR. Ser-15 carries the post-translational modification Phosphoserine. 4 WD repeats span residues 138–178, 182–220, 250–289, and 338–375; these read QQGC…PVCV, GHKD…LTKS, PDNC…SKLL, and ERGS…FLEE.

The protein belongs to the WD repeat DCAF12 family. In terms of assembly, component of the DCX(DCAF12) E3 ubiquitin ligase complex, at least composed of CUL4 (CUL4A or CUL4B), DDB1, DCAF12 and RBX1.

Its subcellular location is the cytoplasm. It is found in the cytoskeleton. The protein localises to the microtubule organizing center. The protein resides in the centrosome. It localises to the nucleus. It participates in protein modification; protein ubiquitination. Substrate-recognition component of a DCX (DDB1-CUL4-X-box) E3 ubiquitin-protein ligase complex of the DesCEND (destruction via C-end degrons) pathway, which recognizes a C-degron located at the extreme C terminus of target proteins, leading to their ubiquitination and degradation. The C-degron recognized by the DesCEND pathway is usually a motif of less than ten residues and can be present in full-length proteins, truncated proteins or proteolytically cleaved forms. The DCX(DCAF12) complex specifically recognizes proteins with a diglutamate (Glu-Glu) at the C-terminus, such as MAGEA3, MAGEA6 and CCT5, leading to their ubiquitination and degradation. Ubiquitination of MAGEA3, MAGEA6 by DCX(DCAF12) complex is required for starvation-induced autophagy. Also directly recognizes the C-terminal glutamate-leucine (Glu-Leu) degron as an alternative degron in proteins such as MOV10, leading to their ubiquitination and degradation. Controls the protein level of MOV10 during spermatogenesis and in T cells, especially after their activation. This chain is DDB1- and CUL4-associated factor 12 (DCAF12), found in Macaca fascicularis (Crab-eating macaque).